Reading from the N-terminus, the 67-residue chain is Large ribosomal subunit protein uL29 (67 aa).

Belongs to the universal ribosomal protein uL29 family.

This is Large ribosomal subunit protein uL29 from Exiguobacterium sp. (strain ATCC BAA-1283 / AT1b).